We begin with the raw amino-acid sequence, 483 residues long: Glutamyl-tRNA(Gln) amidotransferase subunit A (483 aa).

Residues Lys75 and Ser150 each act as charge relay system in the active site. Ser174 functions as the Acyl-ester intermediate in the catalytic mechanism.

This sequence belongs to the amidase family. GatA subfamily. Heterotrimer of A, B and C subunits.

The catalysed reaction is L-glutamyl-tRNA(Gln) + L-glutamine + ATP + H2O = L-glutaminyl-tRNA(Gln) + L-glutamate + ADP + phosphate + H(+). Functionally, allows the formation of correctly charged Gln-tRNA(Gln) through the transamidation of misacylated Glu-tRNA(Gln) in organisms which lack glutaminyl-tRNA synthetase. The reaction takes place in the presence of glutamine and ATP through an activated gamma-phospho-Glu-tRNA(Gln). The chain is Glutamyl-tRNA(Gln) amidotransferase subunit A from Legionella pneumophila (strain Paris).